Here is a 237-residue protein sequence, read N- to C-terminus: Demethylmenaquinone methyltransferase (237 aa).

Residues Thr58, Asp79, and Asn106–Ala107 each bind S-adenosyl-L-methionine.

This sequence belongs to the class I-like SAM-binding methyltransferase superfamily. MenG/UbiE family.

The catalysed reaction is a 2-demethylmenaquinol + S-adenosyl-L-methionine = a menaquinol + S-adenosyl-L-homocysteine + H(+). It participates in quinol/quinone metabolism; menaquinone biosynthesis; menaquinol from 1,4-dihydroxy-2-naphthoate: step 2/2. In terms of biological role, methyltransferase required for the conversion of demethylmenaquinol (DMKH2) to menaquinol (MKH2). The protein is Demethylmenaquinone methyltransferase of Bacillus cereus (strain ATCC 10987 / NRS 248).